The primary structure comprises 527 residues: Dual specificity protein kinase shkA (527 aa).

A Protein kinase domain is found at 45–304; it reads ITTESILGDG…GIVSELEEII (260 aa). ATP-binding positions include 51-59 and Lys72; that span reads LGDGSFGTV. Asp167 functions as the Proton acceptor in the catalytic mechanism. Residues 424–513 enclose the SH2 domain; sequence WFHGDISTSE…INTPCLGSRF (90 aa).

It belongs to the protein kinase superfamily. TKL Ser/Thr protein kinase family. SH2 domain-containing protein kinase subfamily.

Its subcellular location is the membrane. It catalyses the reaction L-seryl-[protein] + ATP = O-phospho-L-seryl-[protein] + ADP + H(+). It carries out the reaction L-threonyl-[protein] + ATP = O-phospho-L-threonyl-[protein] + ADP + H(+). Required for proper chemotaxis and phagocytosis; proper spatiotemporal control of F-actin levels in chemotaxing cells. Negative regulator of the PI3K (phosphatidylinositol 3 kinase) pathway. Predominantly phosphorylates serines and threonines and tyrosines at a lower level. The sequence is that of Dual specificity protein kinase shkA (shkA) from Dictyostelium discoideum (Social amoeba).